Consider the following 297-residue polypeptide: Aspartate carbamoyltransferase catalytic subunit (297 aa).

2 residues coordinate carbamoyl phosphate: Arg-52 and Thr-53. Residue Lys-80 coordinates L-aspartate. Carbamoyl phosphate contacts are provided by Arg-102, His-130, and Gln-133. Arg-167 and Arg-217 together coordinate L-aspartate. The carbamoyl phosphate site is built by Gly-256 and Pro-257.

Belongs to the aspartate/ornithine carbamoyltransferase superfamily. ATCase family. In terms of assembly, heterododecamer (2C3:3R2) of six catalytic PyrB chains organized as two trimers (C3), and six regulatory PyrI chains organized as three dimers (R2).

The catalysed reaction is carbamoyl phosphate + L-aspartate = N-carbamoyl-L-aspartate + phosphate + H(+). It participates in pyrimidine metabolism; UMP biosynthesis via de novo pathway; (S)-dihydroorotate from bicarbonate: step 2/3. Its function is as follows. Catalyzes the condensation of carbamoyl phosphate and aspartate to form carbamoyl aspartate and inorganic phosphate, the committed step in the de novo pyrimidine nucleotide biosynthesis pathway. The protein is Aspartate carbamoyltransferase catalytic subunit of Helicobacter hepaticus (strain ATCC 51449 / 3B1).